The primary structure comprises 355 residues: MPRTISLAVVPGDGIGPEVVHEALRVLREAVPADVSLDTTQYPFGAGHFLETGQILTDSDLAALAQHDAILLGAVGGDPRDARLAGGIIERGLLLKLRFAFDHYINLRPTALLPGVASPLAAPGQVDFVVVREGTEGPYAGNGGVLRRGTEHEIATEVSVNTAHGVERTVRFAFELAEKRDRKRVTLVHKTNVLTFAGSLWQRTVDRVAAEHPDVTVDYLHVDATMIFLVTDPSRFDVIVSDNLFGDIITDLAAAISGGIGLAASGNVNPTGAFPSMFEPVHGSAPDIAGQQKADPTAAILSVALLLDHLGLSEAAARVSAAVSDDLAARATGDAAPRSTAEVGDAILRALSTNH.

Substrate-binding residues include Arg-98, Arg-108, Arg-132, and Asp-223. Mg(2+) contacts are provided by Asp-223, Asp-247, and Asp-251. 283-295 (GSAPDIAGQQKAD) lines the NAD(+) pocket.

The protein belongs to the isocitrate and isopropylmalate dehydrogenases family. LeuB type 2 subfamily. As to quaternary structure, homodimer. Requires Mg(2+) as cofactor. Mn(2+) is required as a cofactor.

The protein localises to the cytoplasm. The enzyme catalyses (2R,3S)-3-isopropylmalate + NAD(+) = 4-methyl-2-oxopentanoate + CO2 + NADH. It functions in the pathway amino-acid biosynthesis; L-leucine biosynthesis; L-leucine from 3-methyl-2-oxobutanoate: step 3/4. Its function is as follows. Catalyzes the oxidation of 3-carboxy-2-hydroxy-4-methylpentanoate (3-isopropylmalate) to 3-carboxy-4-methyl-2-oxopentanoate. The product decarboxylates to 4-methyl-2 oxopentanoate. The protein is 3-isopropylmalate dehydrogenase of Clavibacter sepedonicus (Clavibacter michiganensis subsp. sepedonicus).